A 158-amino-acid chain; its full sequence is Regulator of sigma D (158 aa).

The protein belongs to the Rsd/AlgQ family. Interacts with RpoD.

It localises to the cytoplasm. Binds RpoD and negatively regulates RpoD-mediated transcription activation by preventing the interaction between the primary sigma factor RpoD with the catalytic core of the RNA polymerase and with promoter DNA. May be involved in replacement of the RNA polymerase sigma subunit from RpoD to RpoS during the transition from exponential growth to the stationary phase. The protein is Regulator of sigma D of Escherichia fergusonii (strain ATCC 35469 / DSM 13698 / CCUG 18766 / IAM 14443 / JCM 21226 / LMG 7866 / NBRC 102419 / NCTC 12128 / CDC 0568-73).